An 820-amino-acid chain; its full sequence is Crinkler effector protein 108 (820 aa).

Residues 1–17 (MVKLYCAVVGVAGSAFS) form the signal peptide. The segment at 18 to 55 (VRVDESDTVDDLKDAIKAKKPNDFKDIDADKLELYVAK) is LQLFLAK domain. The tract at residues 58-111 (GVWLTEADVKSGVADITGLVRLEVVRAKLFSVGLSDEVVSEVDAQEEAAGRGPV) is DWL domain. The HVLVXXP motif signature appears at 112–117 (NVLVVV). A Host nuclear localization signal motif is present at residues 118-124 (PMKKRRV). The segment at 125–820 (DAGVDEERRF…MHYDDDEADL (696 aa)) is C-terminal DC effector domain. 3 N-linked (GlcNAc...) asparagine glycosylation sites follow: N268, N371, and N703. Residues 754-791 (NINTASFHELRRLEGVGDATAAKIIAERTIRRFSNLED) form a hhH DNA-binding domain region.

Belongs to the Crinkler effector family.

The protein localises to the secreted. It is found in the host nucleus. In terms of biological role, secreted effector that suppresses plant basal defense and promotes plant susceptibility via targeting promoters of host HSP gene and thus inhibiting their expression. CRN108 binds directly to heat shock elements (HSEs) 5'-GAAnnTTC-3' and interferes with the association of the HSE with the plant heat shock transcription factors, which initializes HSP gene expression in response to stress. The sequence is that of Crinkler effector protein 108 from Phytophthora sojae (Soybean stem and root rot agent).